The primary structure comprises 355 residues: N6-mAMP deaminase (355 aa).

The Zn(2+) site is built by His13 and His15. Residues His15, Asn17, His65, 97 to 100 (TTPK), Asp160, and Gly190 each bind N(6)-methyl-AMP. A Zn(2+)-binding site is contributed by His217. 3 residues coordinate N(6)-methyl-AMP: Glu220, Asp295, and Asp296. Glu220 (proton donor) is an active-site residue. A Zn(2+)-binding site is contributed by Asp295.

Belongs to the metallo-dependent hydrolases superfamily. Adenosine and AMP deaminases family. As to quaternary structure, monomer. Zn(2+) serves as cofactor.

The protein resides in the cytoplasm. It localises to the cytosol. It catalyses the reaction N(6)-methyl-AMP + H2O + H(+) = IMP + methylamine. In terms of biological role, catalyzes the hydrolysis of the free cytosolic methylated adenosine nucleotide N(6)-methyl-AMP (N6-mAMP) to produce inositol monophosphate (IMP) and methylamine. Is required for the catabolism of cytosolic N6-mAMP, which is derived from the degradation of mRNA containing N6-methylated adenine (m6A). Does not possess deaminase activity toward adenosine, AMP, N6-methyladenosine, or N6-mATP in vitro. The polypeptide is N6-mAMP deaminase (Arabidopsis thaliana (Mouse-ear cress)).